Consider the following 285-residue polypeptide: Complex I assembly factor TIMMDC1, mitochondrial (285 aa).

4 helical membrane passes run 80–100 (AALS…FIYA), 137–159 (RWSW…LTVY), 165–185 (LSHF…NLGL), and 188–208 (LVAG…LLMA).

It belongs to the Tim17/Tim22/Tim23 family. Associates with the intermediate 315 kDa subcomplex of incompletely assembled complex I. Interacts with TMEM70.

Its subcellular location is the mitochondrion membrane. Chaperone protein involved in the assembly of the mitochondrial NADH:ubiquinone oxidoreductase complex (complex I). Participates in constructing the membrane arm of complex I. The polypeptide is Complex I assembly factor TIMMDC1, mitochondrial (Rattus norvegicus (Rat)).